Consider the following 271-residue polypeptide: Tryptophan synthase alpha chain (271 aa).

Catalysis depends on proton acceptor residues Glu49 and Asp60.

This sequence belongs to the TrpA family. As to quaternary structure, tetramer of two alpha and two beta chains.

The catalysed reaction is (1S,2R)-1-C-(indol-3-yl)glycerol 3-phosphate + L-serine = D-glyceraldehyde 3-phosphate + L-tryptophan + H2O. Its pathway is amino-acid biosynthesis; L-tryptophan biosynthesis; L-tryptophan from chorismate: step 5/5. Functionally, the alpha subunit is responsible for the aldol cleavage of indoleglycerol phosphate to indole and glyceraldehyde 3-phosphate. The sequence is that of Tryptophan synthase alpha chain from Burkholderia mallei (strain NCTC 10247).